A 457-amino-acid chain; its full sequence is Siroheme synthase (457 aa).

Residues 1-204 form a precorrin-2 dehydrogenase /sirohydrochlorin ferrochelatase region; the sequence is MDHLPIFCQL…NDQKAITETT (204 aa). Residues 22–23 and 43–44 contribute to the NAD(+) site; these read DV and LA. Serine 128 is subject to Phosphoserine. The tract at residues 216-457 is uroporphyrinogen-III C-methyltransferase; the sequence is GEVVLVGAGP…RDKLNWFSNH (242 aa). Proline 225 contacts S-adenosyl-L-methionine. The Proton acceptor role is filled by aspartate 248. Catalysis depends on lysine 270, which acts as the Proton donor. Residues 301–303, isoleucine 306, 331–332, methionine 382, and glycine 411 contribute to the S-adenosyl-L-methionine site; these read GGD and TA.

It in the N-terminal section; belongs to the precorrin-2 dehydrogenase / sirohydrochlorin ferrochelatase family. The protein in the C-terminal section; belongs to the precorrin methyltransferase family.

The enzyme catalyses uroporphyrinogen III + 2 S-adenosyl-L-methionine = precorrin-2 + 2 S-adenosyl-L-homocysteine + H(+). It catalyses the reaction precorrin-2 + NAD(+) = sirohydrochlorin + NADH + 2 H(+). It carries out the reaction siroheme + 2 H(+) = sirohydrochlorin + Fe(2+). It participates in cofactor biosynthesis; adenosylcobalamin biosynthesis; precorrin-2 from uroporphyrinogen III: step 1/1. The protein operates within cofactor biosynthesis; adenosylcobalamin biosynthesis; sirohydrochlorin from precorrin-2: step 1/1. It functions in the pathway porphyrin-containing compound metabolism; siroheme biosynthesis; precorrin-2 from uroporphyrinogen III: step 1/1. Its pathway is porphyrin-containing compound metabolism; siroheme biosynthesis; siroheme from sirohydrochlorin: step 1/1. It participates in porphyrin-containing compound metabolism; siroheme biosynthesis; sirohydrochlorin from precorrin-2: step 1/1. Functionally, multifunctional enzyme that catalyzes the SAM-dependent methylations of uroporphyrinogen III at position C-2 and C-7 to form precorrin-2 via precorrin-1. Then it catalyzes the NAD-dependent ring dehydrogenation of precorrin-2 to yield sirohydrochlorin. Finally, it catalyzes the ferrochelation of sirohydrochlorin to yield siroheme. The protein is Siroheme synthase of Escherichia coli O6:H1 (strain CFT073 / ATCC 700928 / UPEC).